A 58-amino-acid chain; its full sequence is Small ribosomal subunit protein bS21 (58 aa).

This sequence belongs to the bacterial ribosomal protein bS21 family.

This chain is Small ribosomal subunit protein bS21, found in Picosynechococcus sp. (strain ATCC 27264 / PCC 7002 / PR-6) (Agmenellum quadruplicatum).